The chain runs to 518 residues: Nif-specific regulatory protein (518 aa).

In terms of domain architecture, GAF spans 35–176; that stretch reads NTARALAAIL…MVANLISQPL (142 aa). Positions 205–432 constitute a Sigma-54 factor interaction domain; sequence VGKSQAMRQT…LENCLERASV (228 aa). Residues 232 to 239 and 295 to 304 contribute to the ATP site; these read GESGTGKE and ADGGTLFLDE. The segment at 433 to 475 is inter-domain linker; that stretch reads MTDEGLIDRDVILFNHHESPALSVKPGLPLATDESWLDQELDE. The segment at 476-518 is C-terminal DNA-binding domain; that stretch reads RQRVIAALEKTGWVQAKAARLLGMTPRQIAYRIQIMDINMHRI. Positions 490-509 form a DNA-binding region, H-T-H motif; the sequence is QAKAARLLGMTPRQIAYRIQ.

As to quaternary structure, interacts with sigma-54.

Functionally, required for activation of most nif operons, which are directly involved in nitrogen fixation. The sequence is that of Nif-specific regulatory protein (nifA) from Enterobacter agglomerans (Erwinia herbicola).